Here is a 215-residue protein sequence, read N- to C-terminus: MNFDRARKKMVQEQIATRGITDRRVLDAMLKTPRHIFVQEAMAAQAYSDSSLPVGEKQTISQPYTVALMTELLELTGREKVLEIGTGSGYQTAILAALADRVYTVERIRPLALRARKCLDSLRLFNVMLRINDSEGSPIGWDEEAPFDAIIVTAGAPAVPQVLTDQLAVDGRLVIPVGDEREQRLVKIVRKNDGTLETTTSIGCRFVPLIGRQGW.

Ser61 is an active-site residue.

The protein belongs to the methyltransferase superfamily. L-isoaspartyl/D-aspartyl protein methyltransferase family.

It is found in the cytoplasm. The enzyme catalyses [protein]-L-isoaspartate + S-adenosyl-L-methionine = [protein]-L-isoaspartate alpha-methyl ester + S-adenosyl-L-homocysteine. Catalyzes the methyl esterification of L-isoaspartyl residues in peptides and proteins that result from spontaneous decomposition of normal L-aspartyl and L-asparaginyl residues. It plays a role in the repair and/or degradation of damaged proteins. This is Protein-L-isoaspartate O-methyltransferase 1 from Pelobacter propionicus (strain DSM 2379 / NBRC 103807 / OttBd1).